Reading from the N-terminus, the 111-residue chain is Large ribosomal subunit protein uL23 (111 aa).

Belongs to the universal ribosomal protein uL23 family. In terms of assembly, part of the 50S ribosomal subunit. Contacts protein L29, and trigger factor when it is bound to the ribosome.

One of the early assembly proteins it binds 23S rRNA. One of the proteins that surrounds the polypeptide exit tunnel on the outside of the ribosome. Forms the main docking site for trigger factor binding to the ribosome. This chain is Large ribosomal subunit protein uL23, found in Chlamydia muridarum (strain MoPn / Nigg).